A 145-amino-acid chain; its full sequence is D-aminoacyl-tRNA deacylase (145 aa).

Positions 137 to 138 (GP) match the Gly-cisPro motif, important for rejection of L-amino acids motif.

This sequence belongs to the DTD family. As to quaternary structure, homodimer.

It is found in the cytoplasm. The catalysed reaction is glycyl-tRNA(Ala) + H2O = tRNA(Ala) + glycine + H(+). It catalyses the reaction a D-aminoacyl-tRNA + H2O = a tRNA + a D-alpha-amino acid + H(+). Functionally, an aminoacyl-tRNA editing enzyme that deacylates mischarged D-aminoacyl-tRNAs. Also deacylates mischarged glycyl-tRNA(Ala), protecting cells against glycine mischarging by AlaRS. Acts via tRNA-based rather than protein-based catalysis; rejects L-amino acids rather than detecting D-amino acids in the active site. By recycling D-aminoacyl-tRNA to D-amino acids and free tRNA molecules, this enzyme counteracts the toxicity associated with the formation of D-aminoacyl-tRNA entities in vivo and helps enforce protein L-homochirality. This Klebsiella pneumoniae (strain 342) protein is D-aminoacyl-tRNA deacylase.